Reading from the N-terminus, the 506-residue chain is Cytochrome P450 monooxygenase TES1 (506 aa).

A helical transmembrane segment spans residues 26–46 (MSVVLAGLILLASIYFPRFMF). N-linked (GlcNAc...) asparagine glycans are attached at residues N167, N201, N298, and N427. Residue C440 coordinates heme.

The protein belongs to the cytochrome P450 family. The cofactor is heme.

It is found in the membrane. It functions in the pathway phytotoxin biosynthesis. In terms of biological role, cytochrome P450 monooxygenase; part of the gene cluster that mediates the biosynthesis of the phytotoxin tentoxin, an inhibitor the F1-ATPase activity of chloroplasts, resulting in chlorosis in sensitive plants. Tentoxin is a cyclic tetrapeptide that consists of four amino acid residues: glycine (Gly), alanine (Ala), leucine (Leu), and dehydrophenylalanine (DPhe). In addition, both the Ala and DPhe residues are N-methylated. The nonribosomal peptide synthetase TES assembles tentoxin from the four substrate amino acids. The adenylation domains of each of the 4 modules are responsible for the activation of Gly, Ala, Leu and DPhe, respectively. In addition, the N-methyltransferase domains in the second and fourth modules of TES could be responsible for N-methylation of Ala and DPhe residues. Finally, the condensation domain located in the termination module probably catalyzes the formation of the intramolecular macrocyclization and then the release of tentoxin. The cytochrome P450 monooxygenase TES1 is predicted to be involved in the formation of DPhe. The polypeptide is Cytochrome P450 monooxygenase TES1 (Alternaria alternata (Alternaria rot fungus)).